A 107-amino-acid polypeptide reads, in one-letter code: Thioredoxin (107 aa).

A Thioredoxin domain is found at 2 to 107; the sequence is SVSQVTDASF…LASTLNKYIS (106 aa). Active-site nucleophile residues include Cys-31 and Cys-34. Cys-31 and Cys-34 are disulfide-bonded.

Belongs to the thioredoxin family.

The protein resides in the plastid. It localises to the chloroplast. Its function is as follows. Participates in various redox reactions through the reversible oxidation of its active center dithiol to a disulfide and catalyzes dithiol-disulfide exchange reactions. The protein is Thioredoxin (trxA) of Pyropia yezoensis (Susabi-nori).